We begin with the raw amino-acid sequence, 424 residues long: UDP-N-acetylglucosamine 1-carboxyvinyltransferase (424 aa).

K22–N23 contacts phosphoenolpyruvate. R93 lines the UDP-N-acetyl-alpha-D-glucosamine pocket. C117 (proton donor) is an active-site residue. C117 is subject to 2-(S-cysteinyl)pyruvic acid O-phosphothioketal. UDP-N-acetyl-alpha-D-glucosamine-binding positions include R122–L126, K162–V165, D307, and I329.

Belongs to the EPSP synthase family. MurA subfamily.

The protein localises to the cytoplasm. The enzyme catalyses phosphoenolpyruvate + UDP-N-acetyl-alpha-D-glucosamine = UDP-N-acetyl-3-O-(1-carboxyvinyl)-alpha-D-glucosamine + phosphate. It functions in the pathway cell wall biogenesis; peptidoglycan biosynthesis. Cell wall formation. Adds enolpyruvyl to UDP-N-acetylglucosamine. The chain is UDP-N-acetylglucosamine 1-carboxyvinyltransferase from Haemophilus influenzae (strain PittEE).